The chain runs to 70 residues: MKYILLGLLLMVVLANANRLADPNCGVCTLRSICFMEKESCPKGFKCCAFKRQDKPGSKITRGCCVKNKN.

The signal sequence occupies residues 1–17 (MKYILLGLLLMVVLANA).

The protein belongs to the scutigerotoxin-02 family. In terms of processing, contains 4 disulfide bonds. As to expression, expressed by the venom gland.

The protein resides in the secreted. This chain is U-scutigerotoxin(02)-Tl1a, found in Thereuopoda longicornis (Long-legged centipede).